We begin with the raw amino-acid sequence, 401 residues long: MSELSYLEKLMDGVEVEWLPLSKVFNLRNGYTPSKTKKEFWANGDIPWFRMDDIRENGRILGSSLQKISSCAVKGGKLFPENSILISTSATIGEHALITVPHLANQRFTCLALKESYADCFDIKFLFYYCFSLAEWCRKNTTMSSFASVDMDGFKKFLIPRPCPDNPEKSLAIQSEIVRILDKFSALTAELTAELTAELSMRKKQYNYYRDQLLSFKEDEVEGKRKTLGEIMKMRAGQHISAHNIIERKEESYIYPCFGGNGIRGYVKEKSHDGEHLLIGRQGALCGNVQRMKGQFYATEHAVVVSVMPGINIDWAFHMLTAMNLNQYASKSAQPGLAVGKLQELKLFVPSIERQIYIAAILDKFDTLTNSITEVSRVKSSCARNSTNIIEICYLVSRSRK.

This sequence belongs to the type-I restriction system S methylase family. As to quaternary structure, the type I restriction/modification system is composed of three polypeptides R, M and S; the restriction enzyme has stoichiometry R(2)M(2)S(1) while the methyltransferase is M(2)S(1).

In terms of biological role, the specificity (S) subunit of a type I restriction enzyme; this subunit dictates DNA sequence specificity. The M and S subunits together form a methyltransferase (MTase) that methylates two adenine residues of the sequence 5'-CCAN(7)ATGC-3'. In the presence of the R subunit the complex can also act as an endonuclease, binding to the same target sequence but cutting the DNA some distance from this site. Whether the DNA is cut or modified depends on the methylation state of the target sequence. When the target site is unmodified, the DNA is cut. When the target site is hemimethylated, the complex acts as a maintenance MTase modifying the DNA so that both strands become methylated. After locating a non-methylated recognition site, the enzyme complex serves as a molecular motor that translocates DNA in an ATP-dependent manner until a collision occurs that triggers cleavage. The protein is Type I restriction enzyme EcoprrI specificity subunit (prrB) of Escherichia coli.